The primary structure comprises 194 residues: MPKVGMREIRRAQLIDATLRSIDEAGLPGTTLASVAQRANISTGIVSHYFGDKDGLLEATMRHVLRDLWSATTRRRVAARKDPRSRLRAVVAANFDDTQVSAPVMKTWLAFWSQSMHDPMLKRLQHVNTRRLHSNLCAEFAKALPRTKAREAASGLAALIDGLWLRGALAGGPIDTRAALKLAHDYIDLLLASD.

The HTH tetR-type domain maps to 8 to 68 (EIRRAQLIDA…ATMRHVLRDL (61 aa)). The H-T-H motif DNA-binding region spans 31-50 (TLASVAQRANISTGIVSHYF).

Its pathway is amine and polyamine biosynthesis; betaine biosynthesis via choline pathway [regulation]. Repressor involved in the biosynthesis of the osmoprotectant glycine betaine. It represses transcription of the choline transporter BetT and the genes of BetAB involved in the synthesis of glycine betaine. In Burkholderia cenocepacia (strain ATCC BAA-245 / DSM 16553 / LMG 16656 / NCTC 13227 / J2315 / CF5610) (Burkholderia cepacia (strain J2315)), this protein is HTH-type transcriptional regulator BetI.